We begin with the raw amino-acid sequence, 169 residues long: Peptide methionine sulfoxide reductase MsrA (169 aa).

Cysteine 13 is a catalytic residue.

Belongs to the MsrA Met sulfoxide reductase family.

It carries out the reaction L-methionyl-[protein] + [thioredoxin]-disulfide + H2O = L-methionyl-(S)-S-oxide-[protein] + [thioredoxin]-dithiol. The catalysed reaction is [thioredoxin]-disulfide + L-methionine + H2O = L-methionine (S)-S-oxide + [thioredoxin]-dithiol. Has an important function as a repair enzyme for proteins that have been inactivated by oxidation. Catalyzes the reversible oxidation-reduction of methionine sulfoxide in proteins to methionine. The polypeptide is Peptide methionine sulfoxide reductase MsrA (Mycolicibacterium vanbaalenii (strain DSM 7251 / JCM 13017 / BCRC 16820 / KCTC 9966 / NRRL B-24157 / PYR-1) (Mycobacterium vanbaalenii)).